The primary structure comprises 258 residues: uncharacterized protein (258 aa).

The first 20 residues, 1-20 (MKCFQKLYIFILILIVLMAG), serve as a signal peptide directing secretion. A lipid anchor (N-palmitoyl cysteine) is attached at C21. Residue C21 is the site of S-diacylglycerol cysteine attachment.

The protein belongs to the staphylococcal tandem lipoprotein family.

Its subcellular location is the cell membrane. This is an uncharacterized protein from Staphylococcus aureus (strain bovine RF122 / ET3-1).